The sequence spans 196 residues: Probable thymidylate kinase (196 aa).

7–14 (GIDGSGKS) provides a ligand contact to ATP.

Belongs to the thymidylate kinase family.

The catalysed reaction is dTMP + ATP = dTDP + ADP. In Natronomonas pharaonis (strain ATCC 35678 / DSM 2160 / CIP 103997 / JCM 8858 / NBRC 14720 / NCIMB 2260 / Gabara) (Halobacterium pharaonis), this protein is Probable thymidylate kinase.